The sequence spans 554 residues: Carboxypeptidase Y homolog A (554 aa).

Positions 1–17 (MRISASTVLLGAASAAS) are cleaved as a signal peptide. The propeptide occupies 18–137 (AASFQNQAQH…QLDNFNLRVK (120 aa)). 5 disulfide bridges follow: Cys191–Cys431, Cys325–Cys339, Cys349–Cys372, Cys356–Cys365, and Cys394–Cys401. An N-linked (GlcNAc...) asparagine glycan is attached at Asn222. Residue Ser278 is part of the active site. Asp470 is a catalytic residue. An N-linked (GlcNAc...) asparagine glycan is attached at Asn518. His529 is an active-site residue.

Belongs to the peptidase S10 family.

It is found in the vacuole. The catalysed reaction is Release of a C-terminal amino acid with broad specificity.. In terms of biological role, vacuolar carboxypeptidase involved in degradation of small peptides. Digests preferentially peptides containing an aliphatic or hydrophobic residue in P1' position, as well as methionine, leucine or phenylalanine in P1 position of ester substrate. In Neurospora crassa (strain ATCC 24698 / 74-OR23-1A / CBS 708.71 / DSM 1257 / FGSC 987), this protein is Carboxypeptidase Y homolog A (cpyA).